The primary structure comprises 175 residues: Crossover junction endodeoxyribonuclease RuvC (175 aa).

Catalysis depends on residues D16, E76, and D148. Residues D16, E76, and D148 each coordinate Mg(2+).

Belongs to the RuvC family. Homodimer which binds Holliday junction (HJ) DNA. The HJ becomes 2-fold symmetrical on binding to RuvC with unstacked arms; it has a different conformation from HJ DNA in complex with RuvA. In the full resolvosome a probable DNA-RuvA(4)-RuvB(12)-RuvC(2) complex forms which resolves the HJ. Mg(2+) is required as a cofactor.

It is found in the cytoplasm. The enzyme catalyses Endonucleolytic cleavage at a junction such as a reciprocal single-stranded crossover between two homologous DNA duplexes (Holliday junction).. Functionally, the RuvA-RuvB-RuvC complex processes Holliday junction (HJ) DNA during genetic recombination and DNA repair. Endonuclease that resolves HJ intermediates. Cleaves cruciform DNA by making single-stranded nicks across the HJ at symmetrical positions within the homologous arms, yielding a 5'-phosphate and a 3'-hydroxyl group; requires a central core of homology in the junction. The consensus cleavage sequence is 5'-(A/T)TT(C/G)-3'. Cleavage occurs on the 3'-side of the TT dinucleotide at the point of strand exchange. HJ branch migration catalyzed by RuvA-RuvB allows RuvC to scan DNA until it finds its consensus sequence, where it cleaves and resolves the cruciform DNA. This chain is Crossover junction endodeoxyribonuclease RuvC, found in Rhodopseudomonas palustris (strain BisB18).